A 36-amino-acid polypeptide reads, in one-letter code: Photosystem II reaction center protein Psb30 (36 aa).

The chain crosses the membrane as a helical span at residues 8–28; sequence IIAQLTVVTLTLLAGPVIVFL.

This sequence belongs to the Psb30/Ycf12 family. PSII is composed of 1 copy each of membrane proteins PsbA, PsbB, PsbC, PsbD, PsbE, PsbF, PsbH, PsbI, PsbJ, PsbK, PsbL, PsbM, PsbT, PsbX, PsbY, PsbZ, Psb30/Ycf12, peripheral proteins of the oxygen-evolving complex and a large number of cofactors. It forms dimeric complexes.

The protein localises to the plastid. It is found in the cyanelle thylakoid membrane. A core subunit of photosystem II (PSII), probably helps stabilize the reaction center. The chain is Photosystem II reaction center protein Psb30 from Cyanophora paradoxa.